The sequence spans 156 residues: Cyclic pyranopterin monophosphate synthase (156 aa).

Substrate-binding positions include 75–77 (LCH) and 111–112 (ME). Residue aspartate 126 is part of the active site.

This sequence belongs to the MoaC family. In terms of assembly, homohexamer; trimer of dimers.

It carries out the reaction (8S)-3',8-cyclo-7,8-dihydroguanosine 5'-triphosphate = cyclic pyranopterin phosphate + diphosphate. Its pathway is cofactor biosynthesis; molybdopterin biosynthesis. Functionally, catalyzes the conversion of (8S)-3',8-cyclo-7,8-dihydroguanosine 5'-triphosphate to cyclic pyranopterin monophosphate (cPMP). This is Cyclic pyranopterin monophosphate synthase from Erythrobacter litoralis (strain HTCC2594).